We begin with the raw amino-acid sequence, 20 residues long: Methyl-coenzyme M reductase subunit gamma (20 aa).

The segment at 1–20 is disordered; it reads AYERQFYPGATSVAENNIGH.

This sequence belongs to the methyl-coenzyme M reductase gamma subunit family. As to quaternary structure, MCR from M.thermophila is a heterotrimer composed of an alpha, a beta, and a gamma subunit. Requires coenzyme F430 as cofactor.

The protein resides in the cytoplasm. The enzyme catalyses coenzyme B + methyl-coenzyme M = methane + coenzyme M-coenzyme B heterodisulfide. It functions in the pathway one-carbon metabolism; methyl-coenzyme M reduction; methane from methyl-coenzyme M: step 1/1. In terms of biological role, component of the methyl-coenzyme M reductase (MCR) I that catalyzes the reductive cleavage of methyl-coenzyme M (CoM-S-CH3 or 2-(methylthio)ethanesulfonate) using coenzyme B (CoB or 7-mercaptoheptanoylthreonine phosphate) as reductant which results in the production of methane and the mixed heterodisulfide of CoB and CoM (CoM-S-S-CoB). This is the final step in methanogenesis. The chain is Methyl-coenzyme M reductase subunit gamma from Methanosarcina thermophila.